Reading from the N-terminus, the 126-residue chain is C-type natriuretic peptide (126 aa).

Residues 1–23 (MHLSQLLACALLLTLLSLRPSEA) form the signal peptide. Positions 19-72 (RPSEAKPGAPPKVPRTPPGEEVAEPQAAGGGQKKGDKTPGGGGANLKGDRSRLL) are disordered. Residues 24–73 (KPGAPPKVPRTPPGEEVAEPQAAGGGQKKGDKTPGGGGANLKGDRSRLLR) constitute a propeptide that is removed on maturation. Residues 26–35 (GAPPKVPRTP) show a composition bias toward pro residues. A compositionally biased stretch (gly residues) spans 46-63 (AGGGQKKGDKTPGGGGAN). Cys-110 and Cys-126 form a disulfide bridge.

This sequence belongs to the natriuretic peptide family. Degraded by IDE (in vitro).

Its subcellular location is the secreted. Hormone which plays a role in endochondral ossification through regulation of cartilaginous growth plate chondrocytes proliferation and differentiation. May also be vasoactive and natriuretic. Acts by specifically binding and stimulating NPR2 to produce cGMP. Binds the clearance receptor NPR3. This Sus scrofa (Pig) protein is C-type natriuretic peptide (NPPC).